A 248-amino-acid polypeptide reads, in one-letter code: MTTETPLPVLELLPAVDVVNGQAVRLVQGEAGSETSYGTPLEAALNWQEQGAEWVHLVDLDAAFGRGSNAELLREVVGRLDIKVELSGGLRDDESLEKALDLGVARVNLGTAALENPEWTARAIDRFGDKIAVGLDVRGTTLAGRGWTKEGGDLWDVLARLEEAGCARYVVTDVTKDGTLQGPNVELLRKMVERTGKPVVASGGISSLEDLKVLRSLVPLGVEGAIVGKALYAGAFTLPEALDVAGRR.

The active-site Proton acceptor is D17. D136 (proton donor) is an active-site residue.

This sequence belongs to the HisA/HisF family.

It is found in the cytoplasm. The enzyme catalyses 1-(5-phospho-beta-D-ribosyl)-5-[(5-phospho-beta-D-ribosylamino)methylideneamino]imidazole-4-carboxamide = 5-[(5-phospho-1-deoxy-D-ribulos-1-ylimino)methylamino]-1-(5-phospho-beta-D-ribosyl)imidazole-4-carboxamide. Its pathway is amino-acid biosynthesis; L-histidine biosynthesis; L-histidine from 5-phospho-alpha-D-ribose 1-diphosphate: step 4/9. In Arthrobacter sp. (strain FB24), this protein is 1-(5-phosphoribosyl)-5-[(5-phosphoribosylamino)methylideneamino] imidazole-4-carboxamide isomerase.